The primary structure comprises 196 residues: Holliday junction branch migration complex subunit RuvA (196 aa).

The tract at residues 1 to 63 is domain I; that stretch reads MINKIYGKIV…DDDVKLFGFL (63 aa). The segment at 64-142 is domain II; that stretch reads NISEREVFED…KGDESSSYML (79 aa). Position 143 (Lys-143) is a region of interest, flexible linker. The domain III stretch occupies residues 143 to 196; sequence KFKELEQSIVNMGFDRKLVVVAFREIMLSDKFLILKEAEQEQFLFTETLKRLSV.

This sequence belongs to the RuvA family. As to quaternary structure, homotetramer. Forms an RuvA(8)-RuvB(12)-Holliday junction (HJ) complex. HJ DNA is sandwiched between 2 RuvA tetramers; dsDNA enters through RuvA and exits via RuvB. An RuvB hexamer assembles on each DNA strand where it exits the tetramer. Each RuvB hexamer is contacted by two RuvA subunits (via domain III) on 2 adjacent RuvB subunits; this complex drives branch migration. In the full resolvosome a probable DNA-RuvA(4)-RuvB(12)-RuvC(2) complex forms which resolves the HJ.

It is found in the cytoplasm. In terms of biological role, the RuvA-RuvB-RuvC complex processes Holliday junction (HJ) DNA during genetic recombination and DNA repair, while the RuvA-RuvB complex plays an important role in the rescue of blocked DNA replication forks via replication fork reversal (RFR). RuvA specifically binds to HJ cruciform DNA, conferring on it an open structure. The RuvB hexamer acts as an ATP-dependent pump, pulling dsDNA into and through the RuvAB complex. HJ branch migration allows RuvC to scan DNA until it finds its consensus sequence, where it cleaves and resolves the cruciform DNA. The chain is Holliday junction branch migration complex subunit RuvA from Borrelia duttonii (strain Ly).